The chain runs to 268 residues: tRNA pseudouridine synthase A (268 aa).

The active-site Nucleophile is Asp-52. Tyr-110 provides a ligand contact to substrate.

It belongs to the tRNA pseudouridine synthase TruA family. As to quaternary structure, homodimer.

It carries out the reaction uridine(38/39/40) in tRNA = pseudouridine(38/39/40) in tRNA. In terms of biological role, formation of pseudouridine at positions 38, 39 and 40 in the anticodon stem and loop of transfer RNAs. The polypeptide is tRNA pseudouridine synthase A (Prochlorococcus marinus (strain MIT 9515)).